Here is a 122-residue protein sequence, read N- to C-terminus: MSNLSRKQQTQKRHRRLRRHLNGTAQRPRLAVFRSNNHIYAQVIDDEAQNTLCAASTLDKDLRTSLKADGSSCDASNAVGDLVAKRALAKGIQQVVFDRGGNLYHGRVKSLADAAREAGLQF.

A disordered region spans residues 1–27; sequence MSNLSRKQQTQKRHRRLRRHLNGTAQR. A compositionally biased stretch (basic residues) spans 9 to 21; that stretch reads QTQKRHRRLRRHL.

This sequence belongs to the universal ribosomal protein uL18 family. In terms of assembly, part of the 50S ribosomal subunit; part of the 5S rRNA/L5/L18/L25 subcomplex. Contacts the 5S and 23S rRNAs.

Its function is as follows. This is one of the proteins that bind and probably mediate the attachment of the 5S RNA into the large ribosomal subunit, where it forms part of the central protuberance. The chain is Large ribosomal subunit protein uL18 from Prochlorococcus marinus (strain MIT 9303).